Consider the following 206-residue polypeptide: Ras-related protein RABG3e (206 aa).

Position 15-22 (15-22 (GDSGVGKT)) interacts with GTP. The Effector region motif lies at 37 to 45 (YKATIGADF). GTP contacts are provided by residues 63–67 (DTAGQ), 125–128 (NKID), and 158–159 (SA). 2 S-geranylgeranyl cysteine lipidation sites follow: C204 and C206. The residue at position 206 (C206) is a Cysteine methyl ester.

This sequence belongs to the small GTPase superfamily. Rab family.

It localises to the cell membrane. Intracellular vesicle trafficking and protein transport. May play a role in adaptation to stress by recylcing macromolecules in specific cellular compartments. In Arabidopsis thaliana (Mouse-ear cress), this protein is Ras-related protein RABG3e (RABG3E).